The following is an 81-amino-acid chain: Putative defensin-like protein 26 (81 aa).

An N-terminal signal peptide occupies residues 1 to 21; that stretch reads MASLKVFSFALLIVLTFSVIG. Intrachain disulfides connect C33–C81 and C52–C77.

Belongs to the DEFL family.

Its subcellular location is the secreted. This Arabidopsis thaliana (Mouse-ear cress) protein is Putative defensin-like protein 26.